A 166-amino-acid chain; its full sequence is Interleukin-3 (166 aa).

The first 27 residues, 1–27, serve as a signal peptide directing secretion; sequence MVLASSTTSILCMLLPLLMLFHQGLQI. 2 disulfide bridges follow: C43/C106 and C105/C166. Residues N60 and N70 are each glycosylated (N-linked (GlcNAc...) asparagine). Positions 145–166 are disordered; sequence SVSRPPQPTSSSDNFRPMTVEC.

Belongs to the IL-3 family. In terms of assembly, monomer. In terms of tissue distribution, activated T-cells, mast cells, natural killer cells.

The protein resides in the secreted. In terms of biological role, cytokine secreted predominantly by activated T-lymphocytes as well as mast cells and osteoblastic cells that controls the production and differentiation of hematopoietic progenitor cells into lineage-restricted cells. Also stimulates mature basophils, eosinophils, and monocytes to become functionally activated. In addition, plays an important role in neural cell proliferation and survival. Participates as well in bone homeostasis and inhibits osteoclast differentiation by preventing NF-kappa-B nuclear translocation and activation. Mechanistically, exerts its biological effects through a receptor composed of IL3RA subunit and a signal transducing subunit IL3RB. Receptor stimulation results in the rapid activation of JAK2 kinase activity leading to STAT5-mediated transcriptional program. Alternatively, contributes to cell survival under oxidative stress in non-hematopoietic systems by activating pathways mediated by PI3K/AKT and ERK. The chain is Interleukin-3 (Il3) from Rattus norvegicus (Rat).